Reading from the N-terminus, the 191-residue chain is MINNEVSRKYSSALLEVALESDNLSRFKEELEGISKALKQYDDLKKILYHPRVLPDDKKEVIHQVFSDKVSEPVFNFLNLIVDKRREVYLDFIIRDFIKQANRKEGLVKIEVVSAIELSEKQREQLKNKLKKALNKKIELKTKIDPGIIGGIIIKIGDRLIDGSIKHQLDSIKESIEKIPVTELGVIQNES.

This sequence belongs to the ATPase delta chain family. F-type ATPases have 2 components, F(1) - the catalytic core - and F(0) - the membrane proton channel. F(1) has five subunits: alpha(3), beta(3), gamma(1), delta(1), epsilon(1). F(0) has three main subunits: a(1), b(2) and c(10-14). The alpha and beta chains form an alternating ring which encloses part of the gamma chain. F(1) is attached to F(0) by a central stalk formed by the gamma and epsilon chains, while a peripheral stalk is formed by the delta and b chains.

The protein localises to the cell inner membrane. Functionally, f(1)F(0) ATP synthase produces ATP from ADP in the presence of a proton or sodium gradient. F-type ATPases consist of two structural domains, F(1) containing the extramembraneous catalytic core and F(0) containing the membrane proton channel, linked together by a central stalk and a peripheral stalk. During catalysis, ATP synthesis in the catalytic domain of F(1) is coupled via a rotary mechanism of the central stalk subunits to proton translocation. This protein is part of the stalk that links CF(0) to CF(1). It either transmits conformational changes from CF(0) to CF(1) or is implicated in proton conduction. This Halothermothrix orenii (strain H 168 / OCM 544 / DSM 9562) protein is ATP synthase subunit delta.